The following is a 274-amino-acid chain: Speedy protein C (274 aa).

The segment at 37–169 (HQEVQAFLSL…FHWAWTRDRR (133 aa)) is speedy/Ringo box; Required for CDK-binding.

This sequence belongs to the Speedy/Ringo family. Interacts with CDK1 and CDK2. Interacts with AURKB. As to expression, expressed in a variety of tissues including bone marrow, kidney, small intestine, liver, placenta and testis.

The protein localises to the cytoplasm. Its function is as follows. Promotes progression through the cell cycle via binding and activation of CDK1 and CDK2. Involved in the spindle-assembly checkpoint. Required for recruitment of MAD2L1, BUBR1 and BUB1 to kinetochores. Required for the correct localization of the active form of Aurora B in prometaphase. The protein is Speedy protein C of Homo sapiens (Human).